The chain runs to 75 residues: Putative defensin-like protein 55 (75 aa).

The first 19 residues, 1–19 (MNITKAYVIFFLVVILTNS), serve as a signal peptide directing secretion. 4 disulfides stabilise this stretch: cysteine 39/cysteine 73, cysteine 43/cysteine 66, cysteine 52/cysteine 71, and cysteine 56/cysteine 72.

It belongs to the DEFL family.

The protein localises to the secreted. The protein is Putative defensin-like protein 55 of Arabidopsis thaliana (Mouse-ear cress).